Reading from the N-terminus, the 308-residue chain is Glycine--tRNA ligase alpha subunit (308 aa).

The protein belongs to the class-II aminoacyl-tRNA synthetase family. As to quaternary structure, tetramer of two alpha and two beta subunits.

It localises to the cytoplasm. The enzyme catalyses tRNA(Gly) + glycine + ATP = glycyl-tRNA(Gly) + AMP + diphosphate. This Streptococcus pyogenes serotype M3 (strain SSI-1) protein is Glycine--tRNA ligase alpha subunit.